The sequence spans 185 residues: Large ribosomal subunit protein bL25 (185 aa).

This sequence belongs to the bacterial ribosomal protein bL25 family. CTC subfamily. As to quaternary structure, part of the 50S ribosomal subunit; part of the 5S rRNA/L5/L18/L25 subcomplex. Contacts the 5S rRNA. Binds to the 5S rRNA independently of L5 and L18.

In terms of biological role, this is one of the proteins that binds to the 5S RNA in the ribosome where it forms part of the central protuberance. The polypeptide is Large ribosomal subunit protein bL25 (Microcystis aeruginosa (strain NIES-843 / IAM M-2473)).